Here is a 598-residue protein sequence, read N- to C-terminus: MGVLGSRVAWAWLVQLLLLQQLAGASHVVYDDLELQAAATTADGVPPSIVDSELRTGYHFQPPKNWINDPNAPMYYKGWYHLFYQYNPKGAVWGNIVWAHSVSRDLINWVALKPAIEPSIRADKYGCWSGSATMMADGTPVIMYTGVNRPDVNYQVQNVALPRNGSDPLLREWVKPGHNPVIVPEGGINATQFRDPTTAWRGADGHWRLLVGSLAGQSRGVAYVYRSRDFRRWTRAAQPLHSAPTGMWECPDFYPVTADGRREGVDTSSAVVDAAASARVKYVLKNSLDLRRYDYYTVGTYDRKAERYVPDDPAGDEHHIRYDYGNFYASKTFYDPAKRRRILWGWANESDTAADDVAKGWAGIQAIPRKVWLDPSGKQLLQWPIEEVERLRGKWPVILKDRVVKPGEHVEVTGLQTAQADVEVSFEVGSLEAAERLDPAMAYDAQRLCSARGADARGGVGPFGLWVLASAGLEEKTAVFFRVFRPAARGGGAGKPVVLMCTDPTKSSRNPNMYQPTFAGFVDTDITNGKISLRSLIDRSVVESFGAGGKACILSRVYPSLAIGKNARLYVFNNGKAEIKVSQLTAWEMKKPVMMNGA.

The N-terminal stretch at 1 to 25 (MGVLGSRVAWAWLVQLLLLQQLAGA) is a signal peptide. Aspartate 69 is an active-site residue. 3 N-linked (GlcNAc...) asparagine glycosylation sites follow: asparagine 164, asparagine 189, and asparagine 348.

The protein belongs to the glycosyl hydrolase 32 family. In terms of tissue distribution, expressed in leaves and flowers. Weakly expressed in seeds. Expressed in growing roots, node and the rapidly elongating zone of the internode.

The protein localises to the secreted. The protein resides in the cell wall. It carries out the reaction Hydrolysis of terminal non-reducing beta-D-fructofuranoside residues in beta-D-fructofuranosides.. In terms of biological role, cell wall-associated invertase that cleaves sucrose into glucose and fructose and is required for assimilated carbon partitioning during early grain-filling. May be involved in sucrose unloaded in the ovular and stylar vascular tissues for the stimulation of starch synthesis in the developing endosperm during grain-filling. Sugar homeostasis mediated by CIN2/GIF1 plays an important role in constitutive and induced physical and chemical defense against pathogens. The chain is Beta-fructofuranosidase, insoluble isoenzyme 2 (CIN2) from Oryza sativa subsp. japonica (Rice).